We begin with the raw amino-acid sequence, 299 residues long: Tetrahydromethanopterin S-methyltransferase subunit E (299 aa).

6 helical membrane-spanning segments follow: residues 57–77 (AISGEPVSYGLYVAVAGSVAW), 80–100 (INAGLNAVLALIIGSGVAAIV), 133–153 (IGPIVGHGFIAVFTMVLAAYL), 158–178 (LGNPFPLPLVALIFGITVGAI), 237–257 (GLCFGLIIFLDGWRSIVGNII), and 261–281 (LVTKTSIALVVGLLVVVAAMI).

This sequence belongs to the MtrE family. As to quaternary structure, the complex is composed of 8 subunits; MtrA, MtrB, MtrC, MtrD, MtrE, MtrF, MtrG and MtrH.

It is found in the cell membrane. The enzyme catalyses 5-methyl-5,6,7,8-tetrahydromethanopterin + coenzyme M + 2 Na(+)(in) = 5,6,7,8-tetrahydromethanopterin + methyl-coenzyme M + 2 Na(+)(out). Its pathway is one-carbon metabolism; methanogenesis from CO(2); methyl-coenzyme M from 5,10-methylene-5,6,7,8-tetrahydromethanopterin: step 2/2. In terms of biological role, part of a complex that catalyzes the formation of methyl-coenzyme M and tetrahydromethanopterin from coenzyme M and methyl-tetrahydromethanopterin. This is an energy-conserving, sodium-ion translocating step. The protein is Tetrahydromethanopterin S-methyltransferase subunit E of Methanococcus vannielii (strain ATCC 35089 / DSM 1224 / JCM 13029 / OCM 148 / SB).